The primary structure comprises 78 residues: NEDD8-like protein RUB3 (78 aa).

A Glycyl lysine isopeptide (Gly-Lys) (interchain with K-? in acceptor proteins) cross-link involves residue glycine 76. The propeptide occupies 77–78 (CC).

Detected in stems and flower buds, but not in leaves, mature flowers and seedlings.

May function as a stable post-translational protein modifier. This Arabidopsis thaliana (Mouse-ear cress) protein is NEDD8-like protein RUB3 (RUB3).